Consider the following 577-residue polypeptide: Adenine deaminase (577 aa).

It belongs to the metallo-dependent hydrolases superfamily. Adenine deaminase family. The cofactor is Mn(2+).

The catalysed reaction is adenine + H2O + H(+) = hypoxanthine + NH4(+). This chain is Adenine deaminase, found in Bacillus velezensis (strain DSM 23117 / BGSC 10A6 / LMG 26770 / FZB42) (Bacillus amyloliquefaciens subsp. plantarum).